An 823-amino-acid chain; its full sequence is MAASEAAAAAGSAALAAGARAVPAATTGAAAAASGPWVPPGPRLRGSRPRPAGATQQPAVPAPPAGELIQPSVSELSRAVRTNILCTVRGCGKILPNSPALNMHLVKSHRLQDGIVNPTIRKDLKTGPKFYCCPIEGCPRGPERPFSQFSLVKQHFMKMHAEKKHKCSKCSNSYGTEWDLKRHAEDCGKTFRCTCGCPYASRTALQSHIYRTGHEIPAEHRDPPSKKRKMENCAQNQKLSNKTIESLNNQPIPRPDTQELEASEIKLEPSFEDSCGSNTDKQTLTTPPRYPQKLLLPKPKVALVKLPVMQFSVMPVFVPTADSSAQPVVLGVDQGSATGAVHLMPLSVGTLILGLDSEACSLKESLPLFKIANPIAGEPISTGVQVNFGKSPSNPLQELGNTCQKNSISSINVQTDLSYASQNFIPSAQWATADSSVSSCSQTDLSFDSQVSLPISVHTQTFLPSSKVTSSIAAQTDAFMDTCFQSGGVSRETQTSGIESPTDDHVQMDQAGMCGDIFESVHSSYNVATGNIISNSLVAETVTHSLLPQNEPKTLNQDIEKSAPIINFSAQNSMLPSQNMTDNQTQTIDLLSDLENILSSNLPAQTLDHRSLLSDTNPGPDTQLPSGPAQNPGIDFDIEEFFSASNIQTQTEESELSTMTTEPVLESLDIETQTDFLLADTSAQSYGCRGNSNFLGLEMFDTQTQTDLNFFLDSSPHLPLGSILKHSSFSVSTDSSDTETQTEGVSTAKNIPALESKVQLNSTETQTMSSGFETLGSLFFTSNETQTAMDDFLLADLAWNTMESQFSSVETQTSAEPHTVSNF.

The segment at 28–67 (GAAAAASGPWVPPGPRLRGSRPRPAGATQQPAVPAPPAGE) is disordered. The span at 49–59 (PRPAGATQQPA) shows a compositional bias: low complexity. The segment at 84–109 (ILCTVRGCGKILPNSPALNMHLVKSH) adopts a C2H2-type 1 zinc-finger fold. The C2H2-type 2; degenerate zinc-finger motif lies at 165 to 184 (HKCSKCSNSYGTEWDLKRHA). Residues 214 to 225 (HEIPAEHRDPPS) show a composition bias toward basic and acidic residues. Disordered stretches follow at residues 214 to 234 (HEIP…ENCA), 268 to 289 (EPSF…TPPR), and 610 to 634 (RSLL…NPGI). Residues 223–442 (PPSKKRKMEN…ADSSVSSCSQ (220 aa)) are required for formation of RAD51 foci. Composition is skewed to polar residues over residues 275-286 (CGSNTDKQTLTT) and 613-629 (LSDT…SGPA).

As to quaternary structure, interacts via its C-terminus with ATM. Interacts with DYNLL1; this interaction inhibits ATMIN transcriptional activity and hence may play a role in a feedback loop whereby DYNLL1 inhibits transactivation of its own promoter by ATMIN. Ubiquitously expressed in normal tissues and cancer cell lines with highest levels in placenta and skeletal muscle.

The protein localises to the nucleus. Transcription factor. Plays a crucial role in cell survival and RAD51 foci formation in response to methylating DNA damage. Involved in regulating the activity of ATM in the absence of DNA damage. May play a role in stabilizing ATM. Binds to the DYNLL1 promoter and activates its transcription. In Homo sapiens (Human), this protein is ATM interactor (ATMIN).